The following is a 135-amino-acid chain: Class I hydrophobin dewA (135 aa).

An N-terminal signal peptide occupies residues 1-18 (MRFIVSLLAFTAAATATA). Cystine bridges form between cysteine 44-cysteine 114, cysteine 51-cysteine 108, cysteine 52-cysteine 84, and cysteine 115-cysteine 122. The N-linked (GlcNAc...) asparagine glycan is linked to asparagine 60.

This sequence belongs to the fungal hydrophobin family. In terms of assembly, forms homodimers at high concentrations, and these dimers are off-pathway to rodlet formation. Dissociation of the dimers into monomers, with resultant exposure of the hydrophobic face, is necessary for self-assembly to form functional amyloid fibrils called rodlets. Self-assembly into fibrillar rodlets occurs spontaneously at hydrophobic:hydrophilic interfaces and the rodlets further associate laterally to form amphipathic monolayers.

The protein localises to the secreted. The protein resides in the spore wall. Its function is as follows. Aerial growth, conidiation, and dispersal of filamentous fungi in the environment rely upon a capability of their secreting small amphipathic proteins called hydrophobins (HPBs) with low sequence identity. Class I can self-assemble into an outermost layer of rodlet bundles on aerial cell surfaces, conferring cellular hydrophobicity that supports fungal growth, development and dispersal; whereas Class II form highly ordered films at water-air interfaces through intermolecular interactions but contribute nothing to the rodlet structure. DewA is a class I hydrophobin that contributes to spore wall hydrophobicity. The polypeptide is Class I hydrophobin dewA (Emericella nidulans (strain FGSC A4 / ATCC 38163 / CBS 112.46 / NRRL 194 / M139) (Aspergillus nidulans)).